A 90-amino-acid polypeptide reads, in one-letter code: Glycine and tyrosine-rich protein (90 aa).

The N-terminal stretch at 1–21 (MRRSVLVVFLVLAVTNVAVEA) is a signal peptide.

Prismatic layer of shell (at protein level).

The protein localises to the secreted. The polypeptide is Glycine and tyrosine-rich protein (Pinctada maxima (Silver-lipped pearl oyster)).